The sequence spans 1449 residues: MGARNSVLSGKEADELEKVRLRPNGKKKYMLKHVVWAANELDRFGLAESLLDNKEGCQKILSVLAPLVPTGSENLKSLYNTVCVIWCIHAEEKVKHTEEAKQIVQRHLVVETGTADRMPATSRPTAPPSGRGGNYPVQQVGGNYVHLPLSPRTLNAWVKLVEEKKFGAEVVPGFQALSEGCTPYDINQMLNCVGEHQAAMQIIREIINEEAADWDLQHPQPGPLPAGQLREPRGSDIAGTTSTVDEQIQWMYRQQNPIPVGNIYRRWIQLGLQKCVRMYNPTNILDVKQGPKEPFQSYVDRFYKSLRAEQTDPAVKNWMTQTLLIQNANPDCKLVLKGLGMNPTLEEMLTACQGVGGPGQKARLMAEALKEALRPDQLPFAAVQQKGQRKTIKCWNCGKEGHSAKQCRAPRRQGCWKCGKTGHVMAKCPERQAGFFRAWPMGKEAPQFPHGPDASGADTNCSPRGSSCGSTEELHEDGQKAEGEQRETLQGGDRGFAAPQFSLWRRPVVTAYIEEQPVEVLLDTGADDSIVAGIELGPNYTPKIVGGIGGFINTKEYKDVKIKVLGKVIKGTIMTGDTPINIFGRNLLTAMGMSLNLPIAKVEPIKVTLKPGKEGPKLRQWPLSKEKIIALREICEKMEKDGQLEEAPPTNPYNTPTFAIKKKDKNKWRMLIDFRELNKVTQDFTEVQLGIPHPAGLAKRRRITVLDVGDAYFSIPLDEEFRQYTAFTLPSVNNAEPGKRYIYKVLPQGWKGSPAIFQYTMRNVLEPFRKANPDVTLIQYMDDILIASDRTDLEHDRVVLQLKELLNGIGFSTPEEKFQKDPPFQWMGYELWPTKWKLQKIELPQRETWTVNDIQKLVGVLNWAAQIYPGIKTKHLCRLIRGKMTLTEEVQWTEMAEAEYEENKIILSQEQEGCYYQEGKPIEATVIKSQDNQWSYKIHQEDKVLKVGKFAKVKNTHTNGVRLLAHVVQKIGKEALVIWGEVPKFHLPVEREIWEQWWTDYWQVTWIPDWDFVSTPPLVRLVFNLVKEPIQGAETFYVDGSCNRQSREGKAGYVTDRGRDKAKLLEQTTNQQAELEAFYLALADSGPKANIIVDSQYVMGIIAGQPTESESRLVNQIIEEMIKKEAIYVAWVPAHKGIGGNQEVDHLVSQGIRQVLFLKKIEPAQEEHEKYHSNVKELVFKFGLPRLVAKQIVDTCDKCHQKGEAIHGQVNAELGTWQMDCTHLEGKIIIVAVHVASGFIEAEVIPQETGRQTALFLLKLAGRWPITHLHTDNGANFTSQEVKMVAWWAGIEQTFGVPYNPQSQGVVEAMNHHLKTQIDRIREQANSIETIVLMAVHCMNFKRRGGIGDMTPAERLVNMITTEQEIQFQQSKNSKFKNFRVYYREGRDQLWKGPGELLWKGEGAVILKVGTEIKVVPRRKAKIIKDYGGGKELDSGSHLEDTGEAREVA.

A lipid anchor (N-myristoyl glycine; by host) is attached at Gly2. The Nuclear export signal motif lies at 16–22 (LEKVRLR). The Nuclear localization signal signature appears at 26 to 32 (KKKYMLK). Positions 215–237 (DLQHPQPGPLPAGQLREPRGSDI) are disordered. 2 CCHC-type zinc fingers span residues 392-409 (IKCWNCGKEGHSAKQCRA) and 413-430 (QGCWKCGKTGHVMAKCPE). The interval 442 to 494 (GKEAPQFPHGPDASGADTNCSPRGSSCGSTEELHEDGQKAEGEQRETLQGGDR) is disordered. Residues 457–470 (ADTNCSPRGSSCGS) show a composition bias toward polar residues. Residues 472 to 487 (EELHEDGQKAEGEQRE) show a composition bias toward basic and acidic residues. One can recognise a Peptidase A2 domain in the interval 518–587 (VEVLLDTGAD…TPINIFGRNL (70 aa)). Residue Asp523 is the For protease activity; shared with dimeric partner of the active site. The Reverse transcriptase domain occupies 641 to 831 (DGQLEEAPPT…PPFQWMGYEL (191 aa)). Mg(2+) is bound by residues Asp707, Asp782, and Asp783. The RT 'primer grip' stretch occupies residues 824-832 (FQWMGYELW). A Tryptophan repeat motif motif is present at residues 994-1010 (WEQWWTDYWQVTWIPDW). An RNase H type-1 domain is found at 1030-1153 (IQGAETFYVD…VDHLVSQGIR (124 aa)). Mg(2+) contacts are provided by Asp1039, Glu1074, Asp1094, and Asp1145. The Integrase-type zinc finger occupies 1159-1200 (KKIEPAQEEHEKYHSNVKELVFKFGLPRLVAKQIVDTCDKCH). His1168, His1172, Cys1196, and Cys1199 together coordinate Zn(2+). The region spanning 1210–1360 (VNAELGTWQM…TPAERLVNMI (151 aa)) is the Integrase catalytic domain. Mg(2+) is bound by residues Asp1220 and Asp1272. Positions 1379 to 1426 (FRVYYREGRDQLWKGPGELLWKGEGAVILKVGTEIKVVPRRKAKIIKD) form a DNA-binding region, integrase-type.

Homotrimer. Interacts with gp41 (via C-terminus). In terms of assembly, homodimer. The active site consists of two apposed aspartic acid residues. As to quaternary structure, heterodimer of p66 RT and p51 RT (RT p66/p51). Heterodimerization of RT is essential for DNA polymerase activity. Despite the sequence identities, p66 RT and p51 RT have distinct folding. Homotetramer; may further associate as a homohexadecamer. Requires Mg(2+) as cofactor. Specific enzymatic cleavages by the viral protease yield mature proteins. The protease is released by autocatalytic cleavage. The polyprotein is cleaved during and after budding, this process is termed maturation. Proteolytic cleavage of p66 RT removes the RNase H domain to yield the p51 RT subunit. Post-translationally, capsid protein p24 is phosphorylated.

The protein localises to the virion. The protein resides in the host nucleus. Its subcellular location is the host cytoplasm. It localises to the host cell membrane. It carries out the reaction Specific for a P1 residue that is hydrophobic, and P1' variable, but often Pro.. The catalysed reaction is Endohydrolysis of RNA in RNA/DNA hybrids. Three different cleavage modes: 1. sequence-specific internal cleavage of RNA. Human immunodeficiency virus type 1 and Moloney murine leukemia virus enzymes prefer to cleave the RNA strand one nucleotide away from the RNA-DNA junction. 2. RNA 5'-end directed cleavage 13-19 nucleotides from the RNA end. 3. DNA 3'-end directed cleavage 15-20 nucleotides away from the primer terminus.. It catalyses the reaction 3'-end directed exonucleolytic cleavage of viral RNA-DNA hybrid.. The enzyme catalyses DNA(n) + a 2'-deoxyribonucleoside 5'-triphosphate = DNA(n+1) + diphosphate. With respect to regulation, the viral protease is inhibited by many synthetic protease inhibitors (PIs), such as amprenavir, atazanavir, indinavir, loprinavir, nelfinavir, ritonavir and saquinavir. RT can be inhibited either by nucleoside RT inhibitors (NRTIs) or by non nucleoside RT inhibitors (NNRTIs). NRTIs act as chain terminators, whereas NNRTIs inhibit DNA polymerization by binding a small hydrophobic pocket near the RT active site and inducing an allosteric change in this region. Classical NRTIs are abacavir, adefovir (PMEA), didanosine (ddI), lamivudine (3TC), stavudine (d4T), tenofovir (PMPA), zalcitabine (ddC), and zidovudine (AZT). Classical NNRTIs are atevirdine (BHAP U-87201E), delavirdine, efavirenz (DMP-266), emivirine (I-EBU), and nevirapine (BI-RG-587). The tritherapies used as a basic effective treatment of AIDS associate two NRTIs and one NNRTI. Use of protease inhibitors in tritherapy regimens permit more ambitious therapeutic strategies. Gag-Pol polyprotein and Gag polyprotein may regulate their own translation, by the binding genomic RNA in the 5'-UTR. At low concentration, Gag-Pol and Gag would promote translation, whereas at high concentration, the polyproteins encapsidate genomic RNA and then shut off translation. Its function is as follows. Matrix protein p17 has two main functions: in infected cell, it targets Gag and Gag-pol polyproteins to the plasma membrane via a multipartite membrane-binding signal, that includes its myristointegration complex. The myristoylation signal and the NLS exert conflicting influences its subcellular localization. The key regulation of these motifs might be phosphorylation of a portion of MA molecules on the C-terminal tyrosine at the time of virus maturation, by virion-associated cellular tyrosine kinase. Implicated in the release from host cell mediated by Vpu. Functionally, capsid protein p24 forms the conical core that encapsulates the genomic RNA-nucleocapsid complex in the virion. The core is constituted by capsid protein hexamer subunits. The core is disassembled soon after virion entry. Interaction with host PPIA/CYPA protects the virus from restriction by host TRIM5-alpha and from an unknown antiviral activity in host cells. This capsid restriction by TRIM5 is one of the factors which restricts SIV to the simian species. In terms of biological role, nucleocapsid protein p7 encapsulates and protects viral dimeric unspliced (genomic) RNA. Binds these RNAs through its zinc fingers. Facilitates rearangement of nucleic acid secondary structure during retrotranscription of genomic RNA. This capability is referred to as nucleic acid chaperone activity. The aspartyl protease mediates proteolytic cleavages of Gag and Gag-Pol polyproteins during or shortly after the release of the virion from the plasma membrane. Cleavages take place as an ordered, step-wise cascade to yield mature proteins. This process is called maturation. Displays maximal activity during the budding process just prior to particle release from the cell. Also cleaves Nef and Vif, probably concomitantly with viral structural proteins on maturation of virus particles. Hydrolyzes host EIF4GI and PABP1 in order to shut off the capped cellular mRNA translation. The resulting inhibition of cellular protein synthesis serves to ensure maximal viral gene expression and to evade host immune response. Its function is as follows. Reverse transcriptase/ribonuclease H (RT) is a multifunctional enzyme that converts the viral dimeric RNA genome into dsDNA in the cytoplasm, shortly after virus entry into the cell. This enzyme displays a DNA polymerase activity that can copy either DNA or RNA templates, and a ribonuclease H (RNase H) activity that cleaves the RNA strand of RNA-DNA heteroduplexes in a partially processive 3' to 5' endonucleasic mode. Conversion of viral genomic RNA into dsDNA requires many steps. A tRNA binds to the primer-binding site (PBS) situated at the 5'-end of the viral RNA. RT uses the 3' end of the tRNA primer to perform a short round of RNA-dependent minus-strand DNA synthesis. The reading proceeds through the U5 region and ends after the repeated (R) region which is present at both ends of viral RNA. The portion of the RNA-DNA heteroduplex is digested by the RNase H, resulting in a ssDNA product attached to the tRNA primer. This ssDNA/tRNA hybridizes with the identical R region situated at the 3' end of viral RNA. This template exchange, known as minus-strand DNA strong stop transfer, can be either intra- or intermolecular. RT uses the 3' end of this newly synthesized short ssDNA to perform the RNA-dependent minus-strand DNA synthesis of the whole template. RNase H digests the RNA template except for two polypurine tracts (PPTs) situated at the 5'-end and near the center of the genome. It is not clear if both polymerase and RNase H activities are simultaneous. RNase H can probably proceed both in a polymerase-dependent (RNA cut into small fragments by the same RT performing DNA synthesis) and a polymerase-independent mode (cleavage of remaining RNA fragments by free RTs). Secondly, RT performs DNA-directed plus-strand DNA synthesis using the PPTs that have not been removed by RNase H as primers. PPTs and tRNA primers are then removed by RNase H. The 3' and 5' ssDNA PBS regions hybridize to form a circular dsDNA intermediate. Strand displacement synthesis by RT to the PBS and PPT ends produces a blunt ended, linear dsDNA copy of the viral genome that includes long terminal repeats (LTRs) at both ends. Functionally, integrase catalyzes viral DNA integration into the host chromosome, by performing a series of DNA cutting and joining reactions. This enzyme activity takes place after virion entry into a cell and reverse transcription of the RNA genome in dsDNA. The first step in the integration process is 3' processing. This step requires a complex comprising the viral genome, matrix protein, Vpr and integrase. This complex is called the pre-integration complex (PIC). The integrase protein removes 2 nucleotides from each 3' end of the viral DNA, leaving recessed CA OH's at the 3' ends. In the second step, the PIC enters cell nucleus. This process is mediated through integrase and Vpr proteins, and allows the virus to infect a non dividing cell. This ability to enter the nucleus is specific of lentiviruses, other retroviruses cannot and rely on cell division to access cell chromosomes. In the third step, termed strand transfer, the integrase protein joins the previously processed 3' ends to the 5' ends of strands of target cellular DNA at the site of integration. The 5'-ends are produced by integrase-catalyzed staggered cuts, 5 bp apart. A Y-shaped, gapped, recombination intermediate results, with the 5'-ends of the viral DNA strands and the 3' ends of target DNA strands remaining unjoined, flanking a gap of 5 bp. The last step is viral DNA integration into host chromosome. This involves host DNA repair synthesis in which the 5 bp gaps between the unjoined strands are filled in and then ligated. Since this process occurs at both cuts flanking the SIV genome, a 5 bp duplication of host DNA is produced at the ends of SIV integration. Alternatively, Integrase may catalyze the excision of viral DNA just after strand transfer, this is termed disintegration. This Cercopithecidae (Old World monkeys) protein is Gag-Pol polyprotein (gag-pol).